We begin with the raw amino-acid sequence, 381 residues long: Cytochrome b (381 aa).

4 helical membrane passes run 34-54 (FGSL…FLAM), 78-99 (WLIR…YLHI), 114-134 (WNIG…GYVL), and 179-199 (FFAF…IHLL). Heme b contacts are provided by histidine 84 and histidine 98. Heme b-binding residues include histidine 183 and histidine 197. Histidine 202 serves as a coordination point for a ubiquinone. Transmembrane regions (helical) follow at residues 227–247 (YKDL…ALFT), 289–309 (LGGV…PLLH), 321–341 (LTQI…WIGG), and 348–368 (FIMV…IIMP).

It belongs to the cytochrome b family. In terms of assembly, the cytochrome bc1 complex contains 3 respiratory subunits (MT-CYB, CYC1 and UQCRFS1), 2 core proteins (UQCRC1 and UQCRC2) and probably 6 low-molecular weight proteins. Heme b serves as cofactor.

It is found in the mitochondrion inner membrane. In terms of biological role, component of the ubiquinol-cytochrome c reductase complex (complex III or cytochrome b-c1 complex) that is part of the mitochondrial respiratory chain. The b-c1 complex mediates electron transfer from ubiquinol to cytochrome c. Contributes to the generation of a proton gradient across the mitochondrial membrane that is then used for ATP synthesis. The sequence is that of Cytochrome b (mt-cyb) from Negaprion brevirostris (Lemon shark).